The primary structure comprises 405 residues: Zinc finger protein ubi-d4 (405 aa).

Disordered stretches follow at residues 80–147 (RKKR…GEFP), 165–194 (DDLD…GGAR), 210–230 (ACDN…VCGK), and 248–280 (AEEE…PDGL). 2 stretches are compositionally biased toward basic and acidic residues: residues 100 to 110 (PDTDQTLKKEG) and 126 to 140 (DPLE…RMDD). Positions 165-174 (DDLDDEDYEE) are enriched in acidic residues. The C2H2-type; atypical zinc-finger motif lies at 209–246 (YACDNSYKQKHSLKPPDRVCGKRYKNRPGLSYHYAHSH). The segment covering 267–277 (RSEEQKSKKGP) has biased composition (basic and acidic residues). 2 PHD-type zinc fingers span residues 284 to 344 (NNYC…CKCC) and 341 to 391 (CKCC…CLDL).

Belongs to the requiem/DPF family.

The protein resides in the cytoplasm. It is found in the nucleus. In terms of biological role, may be a transcription factor required for the apoptosis response following survival factor withdrawal from myeloid cells. Might also have a role in the development and maturation of lymphoid cells. This Gallus gallus (Chicken) protein is Zinc finger protein ubi-d4 (REQ).